The chain runs to 208 residues: Protein IncB (208 aa).

This protein is thought to be cis acting and to contain the putative attachment site on the DNA for the cellular partition apparatus. This Escherichia coli protein is Protein IncB (incB).